A 427-amino-acid chain; its full sequence is Gamma-glutamyl phosphate reductase (427 aa).

The protein belongs to the gamma-glutamyl phosphate reductase family.

Its subcellular location is the cytoplasm. The enzyme catalyses L-glutamate 5-semialdehyde + phosphate + NADP(+) = L-glutamyl 5-phosphate + NADPH + H(+). Its pathway is amino-acid biosynthesis; L-proline biosynthesis; L-glutamate 5-semialdehyde from L-glutamate: step 2/2. In terms of biological role, catalyzes the NADPH-dependent reduction of L-glutamate 5-phosphate into L-glutamate 5-semialdehyde and phosphate. The product spontaneously undergoes cyclization to form 1-pyrroline-5-carboxylate. This is Gamma-glutamyl phosphate reductase from Brucella anthropi (strain ATCC 49188 / DSM 6882 / CCUG 24695 / JCM 21032 / LMG 3331 / NBRC 15819 / NCTC 12168 / Alc 37) (Ochrobactrum anthropi).